We begin with the raw amino-acid sequence, 157 residues long: MNIYVIAVGQRLPRWIGEGYQEYAQRLPRQCSLSLVEIAPARRGKSGHPTQWRQDECRRLLAAVPPNSKVIACDERGQSWSTEEVARRLQIWMNEGQDVVLLIGGPDGLAPLCLEQATGLWSLSSLTLPHGLVRVILAEQIYRAFSLLNRHPYHRAS.

Residues glycine 104 and 123–128 (LSSLTL) contribute to the S-adenosyl-L-methionine site.

It belongs to the RNA methyltransferase RlmH family. As to quaternary structure, homodimer.

It localises to the cytoplasm. It carries out the reaction pseudouridine(1915) in 23S rRNA + S-adenosyl-L-methionine = N(3)-methylpseudouridine(1915) in 23S rRNA + S-adenosyl-L-homocysteine + H(+). Specifically methylates the pseudouridine at position 1915 (m3Psi1915) in 23S rRNA. This is Ribosomal RNA large subunit methyltransferase H from Nitrosococcus oceani (strain ATCC 19707 / BCRC 17464 / JCM 30415 / NCIMB 11848 / C-107).